The chain runs to 102 residues: Small ribosomal subunit protein uS10 (102 aa).

Residues 34–58 form a disordered region; the sequence is VSGPVPLPTKTLEVPSRKSPDGEGT.

Belongs to the universal ribosomal protein uS10 family. Part of the 30S ribosomal subunit.

Its function is as follows. Involved in the binding of tRNA to the ribosomes. The polypeptide is Small ribosomal subunit protein uS10 (Halobacterium salinarum (strain ATCC 29341 / DSM 671 / R1)).